Reading from the N-terminus, the 441-residue chain is Trigger factor (441 aa).

One can recognise a PPIase FKBP-type domain in the interval 161–246; the sequence is GDKVTIDFLG…VHEVLGEKLP (86 aa).

The protein belongs to the FKBP-type PPIase family. Tig subfamily.

Its subcellular location is the cytoplasm. It catalyses the reaction [protein]-peptidylproline (omega=180) = [protein]-peptidylproline (omega=0). In terms of biological role, involved in protein export. Acts as a chaperone by maintaining the newly synthesized protein in an open conformation. Functions as a peptidyl-prolyl cis-trans isomerase. In Teredinibacter turnerae (strain ATCC 39867 / T7901), this protein is Trigger factor.